The sequence spans 382 residues: MNSEFMDALTTLEKEKGISKEVIIEAIEAALISGYKRNFNQAQNVRVDVNRENGSIRVFARKEVVEEVFDARLEISLDEAKGINPNYEVDDVVEIEVTPKDFGRIAAQTAKQVVTQRVREAERGIIYADFIDREEDIMTGIVQRQDNRFIYVDLGKVEALLPLSEQMPNESYRHNDRIKAYITKVEKTTKGPQIMISRTHPGLLKRLFELEVPEIYDGTVELKSVAREAGDRSKISVHAENPEVDPVGACVGPKGSRVQTIVNELKGEKIDIVRWSEDPVEYVANALSPSKVVKVNVNEEEKTTQVIVPDYQLSLAIGKRGQNARLAAKLTGWKIDIKSESEAQELGLLEDEAASHETLALDQETADQPEATVETSKNHEEE.

In terms of domain architecture, S1 motif spans 135 to 199 (EDIMTGIVQR…KGPQIMISRT (65 aa)). A KH domain is found at 301–367 (EKTTQVIVPD…TLALDQETAD (67 aa)). Positions 348–382 (LLEDEAASHETLALDQETADQPEATVETSKNHEEE) are disordered.

Belongs to the NusA family. Monomer. Binds directly to the core enzyme of the DNA-dependent RNA polymerase and to nascent RNA.

Its subcellular location is the cytoplasm. Participates in both transcription termination and antitermination. This Halalkalibacterium halodurans (strain ATCC BAA-125 / DSM 18197 / FERM 7344 / JCM 9153 / C-125) (Bacillus halodurans) protein is Transcription termination/antitermination protein NusA.